A 626-amino-acid chain; its full sequence is Alpha terpineol synthase, chloroplastic (626 aa).

The N-terminal 38 residues, 1–38, are a transit peptide targeting the chloroplast; sequence MALLSVAPLASKSRLHKTLITSAHHLKPSPTTIPTLPV. Residues Asp377, Asp381, and Asp529 each contribute to the Mg(2+) site. The DDXXD motif motif lies at 377 to 381; it reads DDIYD.

Belongs to the terpene synthase family. Tpsd subfamily. The cofactor is Mg(2+). Mn(2+) serves as cofactor.

The protein localises to the plastid. It localises to the chloroplast. The catalysed reaction is (2E)-geranyl diphosphate + H2O = (S)-alpha-terpineol + diphosphate. It catalyses the reaction (2E)-geranyl diphosphate + H2O = (R)-alpha-terpineol + diphosphate. It carries out the reaction (2E)-geranyl diphosphate + H2O = (2E)-geraniol + diphosphate. The enzyme catalyses (2E)-geranyl diphosphate = terpinolene + diphosphate. The catalysed reaction is (2E)-geranyl diphosphate = (4S)-limonene + diphosphate. It functions in the pathway terpene metabolism; oleoresin biosynthesis. Its pathway is secondary metabolite biosynthesis; terpenoid biosynthesis. Monoterpene synthase (TPS) involved in the biosynthesis of monoterpene natural products included in conifer oleoresin secretions and volatile emissions; these compounds contribute to biotic and abiotic stress defense against herbivores and pathogens. Catalyzes the conversion of (2E)-geranyl diphosphate (GPP) to (-)-alpha-terpineol, (+)-alpha-terpineol and terpin-4-ol, and, to a lower extent, to geraniol, terpinolene and (-)-limonene. The protein is Alpha terpineol synthase, chloroplastic of Pinus banksiana (Jack pine).